A 202-amino-acid polypeptide reads, in one-letter code: ATP-dependent Clp protease proteolytic subunit (202 aa).

S101 serves as the catalytic Nucleophile. H126 is an active-site residue.

It belongs to the peptidase S14 family. Component of the chloroplastic Clp protease core complex.

It is found in the plastid. The protein resides in the chloroplast stroma. It carries out the reaction Hydrolysis of proteins to small peptides in the presence of ATP and magnesium. alpha-casein is the usual test substrate. In the absence of ATP, only oligopeptides shorter than five residues are hydrolyzed (such as succinyl-Leu-Tyr-|-NHMec, and Leu-Tyr-Leu-|-Tyr-Trp, in which cleavage of the -Tyr-|-Leu- and -Tyr-|-Trp bonds also occurs).. Functionally, cleaves peptides in various proteins in a process that requires ATP hydrolysis. Has a chymotrypsin-like activity. Plays a major role in the degradation of misfolded proteins. This is ATP-dependent Clp protease proteolytic subunit from Calycanthus floridus var. glaucus (Eastern sweetshrub).